A 240-amino-acid chain; its full sequence is tRNA (guanine-N(7)-)-methyltransferase (240 aa).

Positions 1 to 20 are disordered; sequence MTESHDTPITSDGEARPHRR. Glu-70, Glu-95, Asp-122, and Asp-145 together coordinate S-adenosyl-L-methionine. Asp-145 is an active-site residue. Residues Lys-149, Asp-181, and 218–221 each bind substrate; that span reads TKFE.

The protein belongs to the class I-like SAM-binding methyltransferase superfamily. TrmB family.

The enzyme catalyses guanosine(46) in tRNA + S-adenosyl-L-methionine = N(7)-methylguanosine(46) in tRNA + S-adenosyl-L-homocysteine. It participates in tRNA modification; N(7)-methylguanine-tRNA biosynthesis. Catalyzes the formation of N(7)-methylguanine at position 46 (m7G46) in tRNA. This is tRNA (guanine-N(7)-)-methyltransferase from Pseudomonas putida (strain ATCC 700007 / DSM 6899 / JCM 31910 / BCRC 17059 / LMG 24140 / F1).